The primary structure comprises 371 residues: MHMQSPIQRRKSRQIHVGHVPVGGDAPIAVQSMTNTDTLDVDATVAQIRQLEAAGADIVRVSVPTMDAAEAFGQIKRQVSVPLVADIHFDYKIALRVAELGVDCLRINPGNIGREDRVRAVVDAARHHGIPIRIGVNAGSLEKDLQKKYGEPTPEALVESAMRHIEHLDRLDFQDFKVSVKASDVFMAVAAYRQLAQRIDQPLHLGITEAGGLRSGTVKSSIGLGLLLMEGIGDTIRVSLAADPVEEIKVGYDMLKSLRLRSKGINFIACPSCSRQNFDVIGTMNALEERLDDIMTPLDVSVIGCVVNGPGEAKESDIGLTGGDPANLVYIDGKPASKLRNDHLVDDLEALIRDKVREKEARERDTIAREA.

Residues C270, C273, C305, and E312 each contribute to the [4Fe-4S] cluster site.

It belongs to the IspG family. [4Fe-4S] cluster is required as a cofactor.

It catalyses the reaction (2E)-4-hydroxy-3-methylbut-2-enyl diphosphate + oxidized [flavodoxin] + H2O + 2 H(+) = 2-C-methyl-D-erythritol 2,4-cyclic diphosphate + reduced [flavodoxin]. The protein operates within isoprenoid biosynthesis; isopentenyl diphosphate biosynthesis via DXP pathway; isopentenyl diphosphate from 1-deoxy-D-xylulose 5-phosphate: step 5/6. Its function is as follows. Converts 2C-methyl-D-erythritol 2,4-cyclodiphosphate (ME-2,4cPP) into 1-hydroxy-2-methyl-2-(E)-butenyl 4-diphosphate. The chain is 4-hydroxy-3-methylbut-2-en-1-yl diphosphate synthase (flavodoxin) from Chromohalobacter salexigens (strain ATCC BAA-138 / DSM 3043 / CIP 106854 / NCIMB 13768 / 1H11).